Reading from the N-terminus, the 498-residue chain is Glycerol kinase (498 aa).

Threonine 12 is an ADP binding site. Residues threonine 12, threonine 13, and serine 14 each contribute to the ATP site. Threonine 12 serves as a coordination point for sn-glycerol 3-phosphate. Position 16 (arginine 16) interacts with ADP. Sn-glycerol 3-phosphate-binding residues include arginine 82, glutamate 83, tyrosine 134, and aspartate 244. Arginine 82, glutamate 83, tyrosine 134, aspartate 244, and glutamine 245 together coordinate glycerol. Residues threonine 266 and glycine 310 each contribute to the ADP site. ATP is bound by residues threonine 266, glycine 310, glutamine 314, and glycine 411. Residues glycine 411 and asparagine 415 each coordinate ADP.

The protein belongs to the FGGY kinase family.

It catalyses the reaction glycerol + ATP = sn-glycerol 3-phosphate + ADP + H(+). It functions in the pathway polyol metabolism; glycerol degradation via glycerol kinase pathway; sn-glycerol 3-phosphate from glycerol: step 1/1. Inhibited by fructose 1,6-bisphosphate (FBP). Key enzyme in the regulation of glycerol uptake and metabolism. Catalyzes the phosphorylation of glycerol to yield sn-glycerol 3-phosphate. This is Glycerol kinase from Roseiflexus sp. (strain RS-1).